The primary structure comprises 367 residues: S-adenosylmethionine:tRNA ribosyltransferase-isomerase (367 aa).

Belongs to the QueA family. As to quaternary structure, monomer.

The protein resides in the cytoplasm. It catalyses the reaction 7-aminomethyl-7-carbaguanosine(34) in tRNA + S-adenosyl-L-methionine = epoxyqueuosine(34) in tRNA + adenine + L-methionine + 2 H(+). It functions in the pathway tRNA modification; tRNA-queuosine biosynthesis. Its function is as follows. Transfers and isomerizes the ribose moiety from AdoMet to the 7-aminomethyl group of 7-deazaguanine (preQ1-tRNA) to give epoxyqueuosine (oQ-tRNA). This chain is S-adenosylmethionine:tRNA ribosyltransferase-isomerase, found in Beijerinckia indica subsp. indica (strain ATCC 9039 / DSM 1715 / NCIMB 8712).